The primary structure comprises 350 residues: Farnesyl pyrophosphate synthase (350 aa).

Isopentenyl diphosphate is bound by residues Lys-55, Arg-58, and Gln-94. The Mg(2+) site is built by Asp-101 and Asp-105. A dimethylallyl diphosphate-binding site is contributed by Arg-110. Arg-111 contributes to the isopentenyl diphosphate binding site. Residues Lys-198, Thr-199, Gln-237, Lys-254, and Lys-263 each contribute to the dimethylallyl diphosphate site.

The protein belongs to the FPP/GGPP synthase family. Mg(2+) is required as a cofactor.

The protein resides in the cytoplasm. It carries out the reaction isopentenyl diphosphate + dimethylallyl diphosphate = (2E)-geranyl diphosphate + diphosphate. The catalysed reaction is isopentenyl diphosphate + (2E)-geranyl diphosphate = (2E,6E)-farnesyl diphosphate + diphosphate. The protein operates within isoprenoid biosynthesis; farnesyl diphosphate biosynthesis; farnesyl diphosphate from geranyl diphosphate and isopentenyl diphosphate: step 1/1. Its pathway is isoprenoid biosynthesis; geranyl diphosphate biosynthesis; geranyl diphosphate from dimethylallyl diphosphate and isopentenyl diphosphate: step 1/1. Catalyzes the sequential condensation of isopentenyl pyrophosphate with the allylic pyrophosphates, dimethylallyl pyrophosphate, and then with the resultant geranylpyrophosphate to the ultimate product farnesyl pyrophosphate. In Zea mays (Maize), this protein is Farnesyl pyrophosphate synthase (FPS).